The sequence spans 78 residues: Small ribosomal subunit protein uS17 (78 aa).

This sequence belongs to the universal ribosomal protein uS17 family. In terms of assembly, part of the 30S ribosomal subunit.

In terms of biological role, one of the primary rRNA binding proteins, it binds specifically to the 5'-end of 16S ribosomal RNA. This Maricaulis maris (strain MCS10) (Caulobacter maris) protein is Small ribosomal subunit protein uS17.